The primary structure comprises 132 residues: Small ribosomal subunit protein uS9 (132 aa).

This sequence belongs to the universal ribosomal protein uS9 family.

In Baumannia cicadellinicola subsp. Homalodisca coagulata, this protein is Small ribosomal subunit protein uS9.